Consider the following 267-residue polypeptide: Transcription factor LBX1 (267 aa).

The segment covering 1-21 (MTSKDEAKSSASSVEERRRNA) has biased composition (basic and acidic residues). The segment at 1–36 (MTSKDEAKSSASSVEERRRNALDLLPPPANSNKPLT) is disordered. The segment at residues 127–186 (RRKSRTAFTNHQIYELEKRFLYQKYLSPADRDQIAQQLGLTNAQVITWFQNRRAKLKRDL) is a DNA-binding region (homeobox). The segment at 211–267 (SELEESGSERGNSRSRSPQLGLTSNHMPLSPSXPLTDQHASKECSEDEEDVEIDVDD) is disordered. Positions 228-237 (PQLGLTSNHM) are enriched in polar residues. Residues 255–267 (SEDEEDVEIDVDD) show a composition bias toward acidic residues.

As to expression, expressed in all myoblasts that will populate body wall muscles as well as in a group of cells the migrate into the head.

The protein resides in the nucleus. In terms of biological role, transcription factor that controls hypaxial muscle development by down-regulating myod1 and cdkn1b/p27, thereby allowing myoblasts to proliferate before the onset of terminal differentiation. The protein is Transcription factor LBX1 of Xenopus laevis (African clawed frog).